Here is a 546-residue protein sequence, read N- to C-terminus: 6'''-hydroxyparomomycin C oxidase (546 aa).

Residues 1 to 30 are disordered; the sequence is MERLRGPSPLENTTARHPAPLGPAHRDGLE. Residue His475 is the Proton acceptor of the active site.

Belongs to the GMC oxidoreductase family. The cofactor is FAD.

It functions in the pathway antibiotic biosynthesis; lividomycin biosynthesis. Glucosaminyl-6'-oxidase involved in the biosynthetic pathway of lividomycin by mediating FAD-dependent dehydrogenation of 6'''-hydroxyparomomycin to paromomycin. The polypeptide is 6'''-hydroxyparomomycin C oxidase (livQ) (Streptomyces lividus).